A 339-amino-acid chain; its full sequence is Malate/(S)-sulfolactate dehydrogenase (339 aa).

Belongs to the LDH2/MDH2 oxidoreductase family. In terms of assembly, homodimer.

It localises to the cytoplasm. It catalyses the reaction (S)-malate + NAD(+) = oxaloacetate + NADH + H(+). The catalysed reaction is (S)-malate + NADP(+) = oxaloacetate + NADPH + H(+). It carries out the reaction (2S)-3-sulfolactate + NAD(+) = 3-sulfopyruvate + NADH + H(+). Its function is as follows. Acts on oxaloacetate, sulfopyruvate but not on pyruvate. Has a higher selectivity for the coenzyme NADH than for NADPH. The sequence is that of Malate/(S)-sulfolactate dehydrogenase (mdh) from Methanothermus fervidus (strain ATCC 43054 / DSM 2088 / JCM 10308 / V24 S).